We begin with the raw amino-acid sequence, 88 residues long: Cell division topological specificity factor (88 aa).

The protein belongs to the MinE family.

Functionally, prevents the cell division inhibition by proteins MinC and MinD at internal division sites while permitting inhibition at polar sites. This ensures cell division at the proper site by restricting the formation of a division septum at the midpoint of the long axis of the cell. This is Cell division topological specificity factor from Clostridium kluyveri (strain ATCC 8527 / DSM 555 / NBRC 12016 / NCIMB 10680 / K1).